The sequence spans 248 residues: NAD-dependent protein deacylase 2 (248 aa).

Residues 1–248 (MLQAASALRH…HVMAELISHI (248 aa)) form the Deacetylase sirtuin-type domain. NAD(+) is bound by residues 19 to 38 (GAGLSADSGLPTYRGVGGLY) and 102 to 105 (QNVD). His-122 (proton acceptor) is an active-site residue. Cys-130, Cys-133, Cys-152, and Cys-155 together coordinate Zn(2+). NAD(+) contacts are provided by residues 193 to 195 (GTT), 219 to 221 (NPQ), and Ala-237.

This sequence belongs to the sirtuin family. Class III subfamily. It depends on Zn(2+) as a cofactor.

The protein localises to the cytoplasm. The catalysed reaction is N(6)-acetyl-L-lysyl-[protein] + NAD(+) + H2O = 2''-O-acetyl-ADP-D-ribose + nicotinamide + L-lysyl-[protein]. Functionally, NAD-dependent protein deacetylase which modulates the activities of several proteins which are inactive in their acetylated form. The chain is NAD-dependent protein deacylase 2 (cobB2) from Pseudomonas syringae pv. tomato (strain ATCC BAA-871 / DC3000).